Consider the following 422-residue polypeptide: MSVTVKRIIDSTVIVPKLPANEDPVEYPADYFRKSKEIPLYINTTKSLSDLRGYVYQGLKSGNVSIIHVNSYLYGALKDIRGKLDKDWSSFGINIGKAGDTIGIFDLVSVKALDGVLPDGVSDASRTSADDKWLPLYLLGLYRVGRTQMPEYRKKLMDGLTNQCKMINEQFEPLVPEGRDIFDVWGNDSNYTKIVAAVDMFFHMFKKHECASFRYGTIVSRFKDCAALATFGHLCKITGMSTEDVTTWILNREVADEMVQMMLPGQEIDKADSYMPYLIDFGLSSKSPYSSVKNPAFHFWGQLTALLLRSTRARNARQPDDIEYTSLTTAGLLYAYAVGSSADLAQQFCVGDNKYTPDDSTGGLTTNAPPQGRDVVEWLGWFEDQNRKPTPDMMQYAKRAVMSLQGLREKTIGKYAKSEFDK.

Residues Arg143, Tyr152, Lys206, Arg214, Lys286, and Arg317 each coordinate RNA. The interval 350–390 is interaction with the phosphoprotein; it reads VGDNKYTPDDSTGGLTTNAPPQGRDVVEWLGWFEDQNRKPT. An RNA-binding site is contributed by Arg408.

This sequence belongs to the vesiculovirus nucleocapsid protein family. As to quaternary structure, homomultimerizes to form the nucleocapsid. Binds to viral genomic RNA; this interaction contributes to the virion assembly. N in the nucleocapsid interacts (via C-terminus) with the P protein (via C-terminus); this interaction allows to package the L polymerase in the virion and positions the polymerase on the template, since P acts as a bridge between N and L. N(0) interacts with the P protein; this interaction prevents the uncontrolled aggregation of N(0). Interacts with the matrix protein (inner layer); this interaction contributes to the virion assembly. Interacts with the L polymerase.

The protein resides in the virion. It is found in the host cytoplasm. In terms of biological role, encapsidates the genome in a ratio of one N per nine ribonucleotides, protecting it from nucleases. The encapsidated genomic RNA is termed the NC and serves as template for transcription and replication. The nucleocapsid is bullet-shaped with the tip containing 8 turns of a conical spiral before reaching the helical cylindrical trunk. Nucleocapsid assembly is concomitant with replication, therefore viral replication depends on the intracellular concentration of free N, termed N(0). All replicative products are resistant to nucleases. The sequence is that of Nucleoprotein (N) from Aedes (Bovine).